Consider the following 186-residue polypeptide: Adrenodoxin, mitochondrial (186 aa).

The transit peptide at 1–58 (MAARLLRVASAALGDTAGRWRLLARPRAGAGGLRGSRGPGLGGGAVATRTLSVSGRAQ) directs the protein to the mitochondrion. Ser-61 is subject to Phosphoserine. N6-acetyllysine; alternate is present on Lys-64. The residue at position 64 (Lys-64) is an N6-succinyllysine; alternate. The 2Fe-2S ferredoxin-type domain maps to 65-169 (ITVHFINRDG…NMTVRVPDAV (105 aa)). Residues Cys-104, Cys-110, Cys-113, and Cys-150 each coordinate [2Fe-2S] cluster. An N6-succinyllysine modification is found at Lys-156. Ser-175 carries the phosphoserine modification.

Belongs to the adrenodoxin/putidaredoxin family. As to quaternary structure, interacts with CYP11A1. It depends on [2Fe-2S] cluster as a cofactor. As to expression, detected in adrenal cortex and corpus luteum (at protein level).

The protein localises to the mitochondrion matrix. Its function is as follows. Essential for the synthesis of various steroid hormones. Participates in the reduction of mitochondrial cytochrome P450 for steroidogenesis. Transfers electrons from adrenodoxin reductase to CYP11A1, a cytochrome P450 that catalyzes cholesterol side-chain cleavage to produce pregnenolone, the precursor of most steroid hormones. Does not form a ternary complex with adrenodoxin reductase and CYP11A1 but shuttles between the two enzymes to transfer electrons. This Bos taurus (Bovine) protein is Adrenodoxin, mitochondrial (FDX1).